The primary structure comprises 350 residues: Adenine deaminase (350 aa).

His-24, His-26, and His-207 together coordinate Zn(2+). The active-site Proton donor is Glu-210. Asp-288 is a binding site for Zn(2+). Residue Asp-289 participates in substrate binding.

Belongs to the metallo-dependent hydrolases superfamily. Adenosine and AMP deaminases family. Adenine deaminase type 2 subfamily. It depends on Zn(2+) as a cofactor.

It catalyses the reaction adenine + H2O + H(+) = hypoxanthine + NH4(+). Catalyzes the hydrolytic deamination of adenine to hypoxanthine. Plays an important role in the purine salvage pathway and in nitrogen catabolism. This chain is Adenine deaminase, found in Paraburkholderia xenovorans (strain LB400).